A 548-amino-acid polypeptide reads, in one-letter code: Cytochrome P450 monooxygenase lcsK (548 aa).

Transmembrane regions (helical) follow at residues 28–48 (HAYP…LWAF) and 68–88 (VLLF…RLFF). 4 N-linked (GlcNAc...) asparagine glycosylation sites follow: Asn-172, Asn-223, Asn-242, and Asn-404. Heme is bound at residue Cys-487.

The protein belongs to the cytochrome P450 family. Requires heme as cofactor.

The protein localises to the membrane. Its pathway is secondary metabolite biosynthesis. Cytochrome P450 monooxygenase; part of the gene cluster that mediates the biosynthesis of the lipopeptide antibiotics leucinostatins that show extensive biological activities, including antimalarial, antiviral, antibacterial, antifungal, and antitumor activities, as well as phytotoxic. Leucinostatin A contains nine amino acid residues, including the unusual amino acid 4-methyl-L-proline (MePro), 2-amino-6-hydroxy-4-methyl-8-oxodecanoic acid (AHyMeOA), 3-hydroxyleucine (HyLeu), alpha-aminoisobutyric acid (AIB), beta-Ala, a 4-methylhex-2-enoic acid at the N-terminus as well as a N1,N1-dimethylpropane-1,2-diamine (DPD) at the C-terminus. The biosynthesis of leucinostatins is probably initiated with the assembly of 4-methylhex-2-enoic acid by a reducing PKS. Two reducing polyketide synthases, lcsB and lcsC, have been identified in the cluster and it is not clear which is the one that assembles 4-methylhex-2-enoic acid since both contain KS, AT, DH, cMT, ER, KR and ACP domains. The polyketide residue might be transferred to the NRPS lcsA, mediated by two additional enzymes, the acyl-CoA ligase lcsD and the thioesterase lcsE. The linear polyketide carboxylic acid, which is released from PKS, is converted to a CoA thioester by lcsD, and then lcsE hydrolyzes the thiol bond and shuttles the polyketide intermediate to lcsA. The C domain of the first module catalyzed the condensation of 4-methylhex-2-enoic acid and MePro carried by domain A1, followed by successive condensations of nine amino acids to trigger the elongation of the linear peptide. A5 and A6 domains of lcsA are proposed to incorporate leucine, A2 AHyMeOA, and A3 incorporates HyLeu. A4, A7 and A8 incorporate AIB. The AHyMeOA in leucinostatin A activated by the A2 might be produced by the second PKS (lcsB or lcsC) present within the cluster. The MePro is probably produced via leucine cyclization and may originate from a separate pathway, independent of the cluster. Another nonproteinogenic amino acid, beta-Ala, could be produced by an aspartic acid decarboxylase also localized outside of the cluster. Two candidates are VFPBJ_01400 and VFPBJ_10476. The final peptide scaffold may be released by the NAD(P)H-dependent thioester reductase (TE) at the C-terminal region of lcsA. Transamination of the lcsA product by the transaminase lcsP may produce DPD at the C-terminus. Further hydroxylation steps performed alternatively by the cytochrome P450 monooxygenases lcsI, lcsK and lcsN then yield the non-methylated leucinostatins precursor. It is also possible that leucines can be hydroxylated prior to their incorporation into the peptide. Varying extents of methylation then lead to the formation of leucinostatins A and B. This Purpureocillium lilacinum (Paecilomyces lilacinus) protein is Cytochrome P450 monooxygenase lcsK.